We begin with the raw amino-acid sequence, 140 residues long: uncharacterized protein (140 aa).

The next 2 helical transmembrane spans lie at 63-83 (LGFV…TLAT) and 119-139 (ILLY…IFIN).

The protein localises to the membrane. This is an uncharacterized protein from Schizosaccharomyces pombe (strain 972 / ATCC 24843) (Fission yeast).